A 416-amino-acid polypeptide reads, in one-letter code: MTQQHPLMRLVNSTSLVSQILVGLVFGILLAMFMPEWAKAAGLLGSLFVGALKAVAPLLVFVLVMAAIIGHKQGQKSNMKPILLLYLLGTFLAAAVAVVASFLFPSNLHLVASSAEITPPGGITEVLQTLLFNVVTNPVKALMDANYIGILAWAIGLGIAMRHANDSTKAMITDLSHGVSTIVKAVIRCAPLGILGLVASTLAETGFDALFGYAHLLVVLIGCMLFIAFVVNPIIVFWKIRRNPYPLVLTCLKESGVTAFFTRSSAANIPVNMTLCEKLRLPEDTYAVSIPLGATINMAGAAITITVLSMAAVHTLGMEVDLATAVLLSVVATISACGASGVAGGSLLLIPLACSLFGIGNDIAMQVVAVGFIIGVLQDSAETALNSSTDVLFTAAACMAEDETLLDAASLPSREA.

9 helical membrane-spanning segments follow: residues 15–35 (SLVS…MFMP), 49–69 (VGAL…AAII), 82–102 (ILLL…VASF), 141–161 (ALMD…GIAM), 192–212 (LGIL…ALFG), 217–237 (LVVL…IIVF), 288–308 (VSIP…ITVL), 330–350 (VVAT…LLLI), and 356–376 (LFGI…IIGV).

The protein belongs to the dicarboxylate/amino acid:cation symporter (DAACS) (TC 2.A.23) family.

The protein resides in the cell inner membrane. It catalyses the reaction L-serine(in) + Na(+)(in) = L-serine(out) + Na(+)(out). The catalysed reaction is L-threonine(in) + Na(+)(in) = L-threonine(out) + Na(+)(out). In terms of biological role, involved in the import of serine and threonine into the cell, with the concomitant import of sodium (symport system). This is Serine/threonine transporter SstT from Aeromonas salmonicida (strain A449).